The chain runs to 294 residues: Tyrosine recombinase XerC (294 aa).

The region spanning 1-85 (MSRLVEDFFA…ACRGFYTWLV (85 aa)) is the Core-binding (CB) domain. The Tyr recombinase domain occupies 106-283 (KLPRILDADE…DFQYLSKVYD (178 aa)). Residues Arg-145, Lys-169, His-235, Arg-238, and His-261 contribute to the active site. Tyr-270 (O-(3'-phospho-DNA)-tyrosine intermediate) is an active-site residue.

The protein belongs to the 'phage' integrase family. XerC subfamily. In terms of assembly, forms a cyclic heterotetrameric complex composed of two molecules of XerC and two molecules of XerD.

It is found in the cytoplasm. In terms of biological role, site-specific tyrosine recombinase, which acts by catalyzing the cutting and rejoining of the recombining DNA molecules. The XerC-XerD complex is essential to convert dimers of the bacterial chromosome into monomers to permit their segregation at cell division. It also contributes to the segregational stability of plasmids. The chain is Tyrosine recombinase XerC from Xylella fastidiosa (strain M23).